The primary structure comprises 44 residues: Photosystem I reaction center subunit IX (44 aa).

Residues 9 to 29 (YMRSAPVVAAAWITMTAGIII) form a helical membrane-spanning segment.

Belongs to the PsaJ family.

It is found in the cellular thylakoid membrane. In terms of biological role, may help in the organization of the PsaE and PsaF subunits. This Prochlorococcus marinus (strain MIT 9312) protein is Photosystem I reaction center subunit IX.